The following is a 117-amino-acid chain: Small ribosomal subunit protein uS12c (117 aa).

The disordered stretch occupies residues R9–N40.

It belongs to the universal ribosomal protein uS12 family. As to quaternary structure, part of the 30S ribosomal subunit.

It localises to the plastid. It is found in the chloroplast. With S4 and S5 plays an important role in translational accuracy. Located at the interface of the 30S and 50S subunits. The protein is Small ribosomal subunit protein uS12c (rps12) of Pinus koraiensis (Korean pine).